The sequence spans 333 residues: UPF0284 protein VNG_1572C (333 aa).

It belongs to the UPF0284 family.

The polypeptide is UPF0284 protein VNG_1572C (Halobacterium salinarum (strain ATCC 700922 / JCM 11081 / NRC-1) (Halobacterium halobium)).